The primary structure comprises 300 residues: Tyrosine recombinase XerC (300 aa).

In terms of domain architecture, Core-binding (CB) spans 2–88 (TQEGKLEQQF…SLRSFYTFLL (87 aa)). One can recognise a Tyr recombinase domain in the interval 109-294 (RLPKFFYSEE…TKEHLKSTYM (186 aa)). Catalysis depends on residues Arg150, Lys174, His246, Arg249, and His272. Residue Tyr281 is the O-(3'-phospho-DNA)-tyrosine intermediate of the active site.

Belongs to the 'phage' integrase family. XerC subfamily. In terms of assembly, forms a cyclic heterotetrameric complex composed of two molecules of XerC and two molecules of XerD.

It is found in the cytoplasm. Its function is as follows. Site-specific tyrosine recombinase, which acts by catalyzing the cutting and rejoining of the recombining DNA molecules. The XerC-XerD complex is essential to convert dimers of the bacterial chromosome into monomers to permit their segregation at cell division. It also contributes to the segregational stability of plasmids. The polypeptide is Tyrosine recombinase XerC (Listeria welshimeri serovar 6b (strain ATCC 35897 / DSM 20650 / CCUG 15529 / CIP 8149 / NCTC 11857 / SLCC 5334 / V8)).